The following is a 421-amino-acid chain: Gamma-glutamyl phosphate reductase (421 aa).

It belongs to the gamma-glutamyl phosphate reductase family.

The protein localises to the cytoplasm. The enzyme catalyses L-glutamate 5-semialdehyde + phosphate + NADP(+) = L-glutamyl 5-phosphate + NADPH + H(+). It participates in amino-acid biosynthesis; L-proline biosynthesis; L-glutamate 5-semialdehyde from L-glutamate: step 2/2. Catalyzes the NADPH-dependent reduction of L-glutamate 5-phosphate into L-glutamate 5-semialdehyde and phosphate. The product spontaneously undergoes cyclization to form 1-pyrroline-5-carboxylate. The sequence is that of Gamma-glutamyl phosphate reductase from Acinetobacter baumannii (strain AYE).